We begin with the raw amino-acid sequence, 65 residues long: MKTSCLLTILLLSFLVAVAVAEGERSARAAAISCVGSPECPPKCRAQGCKNGKCMNRKCKCYYCG.

Residues methionine 1–alanine 21 form the signal peptide. Residues glutamate 22–arginine 28 constitute a propeptide that is removed on maturation. Cystine bridges form between cysteine 34–cysteine 54, cysteine 40–cysteine 59, cysteine 44–cysteine 61, and cysteine 49–cysteine 64. Residue cysteine 64 is modified to Cysteine amide.

It belongs to the short scorpion toxin superfamily. Potassium channel inhibitor family. Alpha-KTx 23 subfamily. Expressed by the venom gland.

The protein localises to the secreted. In terms of biological role, voltage-gated potassium channel inhibitor. Selectively and reversibly binds (Kd=0.77 nM) and blocks hKv1.3/KCNA3 potassium channels of human T-lymphocytes. Also shows a very weak effect on hKv1.2/KCNA2 (Kd=7.1 uM). Also reduces the fraction of CD40L expressing T cells that are stimulated by alphaCD3/alphaCD28. The polypeptide is Toxin VmKTx1 (Vaejovis mexicanus smithi (Mexican scorpion)).